The chain runs to 351 residues: MNSSSSRSSMSMPMPMDMPQMHMGMNNNCEMNQMMHPIPNFPMKWEPCTPPDEKPHPSMLFPPLSGIFNQSRHSSTGEDYHGSSSGSPSSSLSSPNEFKDEPLGLDVHFGNSLFNAPFSPSATSSHSPSSYGMMHGSHSMASHQLHQQQLSPLPSVAHFSHSHHLQHHVVQHPSQASLQMNMNQIFSGPSHQYASSSVPHTFLFKDSTIYEGMGGMGLAAAQQQLKARNKMHEMAIRQHLITDQNITANGDLVLSAEERRTLVQEGYSIPQKYPLTKSEEESLKIVRRKIKNKLSAQESRRKRKEYIDALEGRLHCFSEENKSLKKQVHQLEASNRDLQQKLHQYESKEKM.

Disordered regions lie at residues 46–104 and 119–149; these read EPCT…EPLG and SPSA…HQQQ. The span at 82-95 shows a compositional bias: low complexity; that stretch reads GSSSGSPSSSLSSP. Residues 282–345 enclose the bZIP domain; sequence SLKIVRRKIK…RDLQQKLHQY (64 aa). The tract at residues 284–304 is basic motif; the sequence is KIVRRKIKNKLSAQESRRKRK. The leucine-zipper stretch occupies residues 307-314; sequence IDALEGRL.

The protein belongs to the bZIP family.

Its subcellular location is the nucleus. In terms of biological role, transcription factor. Plays a role in regulating the developmentally arrested larval state known as dauer, when induced by long-term exposure to the Gram-negative bacterium P.aeruginosa PAO1, but dispensable for dauer formation induced by starvation. Involved in regulating expression of microRNA mir-243, during long-term exposure to P.aeruginosa PAO1. The protein is CREB homolog crh-2 of Caenorhabditis elegans.